A 516-amino-acid chain; its full sequence is DNA-(apurinic or apyrimidinic site) endonuclease 2 (516 aa).

2 residues coordinate Mg(2+): asparagine 8 and glutamate 47. Residue tyrosine 155 is part of the active site. Aspartate 196, asparagine 198, aspartate 302, and histidine 303 together coordinate Mg(2+). Aspartate 196 acts as the Proton donor/acceptor in catalysis. Catalysis depends on histidine 303, which acts as the Proton acceptor. Polar residues predominate over residues 357–366; sequence QPSHQIQAQR. The interval 357-389 is disordered; it reads QPSHQIQAQRQPRKACMHSTRLRKSQGGPKRKQ. Over residues 367 to 389 the composition is skewed to basic residues; sequence QPRKACMHSTRLRKSQGGPKRKQ. Residue lysine 370 forms a Glycyl lysine isopeptide (Lys-Gly) (interchain with G-Cter in ubiquitin) linkage. The required for the interaction and colocalization with PCNA in nuclear foci in presence of oxidative-induced DNA damaging agents stretch occupies residues 389–396; sequence QKNLMSYF. Residues cysteine 467, histidine 470, cysteine 493, and cysteine 507 each coordinate Zn(2+). The GRF-type zinc finger occupies 467 to 516; sequence CGGHREPCVMRTVKKTGPNFGRQFYMCARPRGPPSDPSSRCNFFLWSRPS.

This sequence belongs to the DNA repair enzymes AP/ExoA family. Interacts with PCNA. This interaction is increased by misincorporation of uracil in nuclear DNA. The cofactor is Mg(2+). Requires Mn(2+) as cofactor. Post-translationally, ubiquitinated by the CUL9-RBX1 complex. Ubiquitinated by MKRN3 at Lys-370 leading to proteasomal degradation. As to expression, expressed in lymphocytes, thymocytes and splenocytes (at protein level). Highly expressed in the thymus and weakly expressed in the bone marrow, spleen, eye, kidney, lung, brain and uterus.

It is found in the nucleus. It localises to the cytoplasm. Its subcellular location is the mitochondrion. It catalyses the reaction Exonucleolytic cleavage in the 3'- to 5'-direction to yield nucleoside 5'-phosphates.. 3'-5' exonuclease activity is activated by sodium and manganese. 3'-5' exonuclease and 3'-phosphodiesterase activities are stimulated in presence of PCNA. Functionally, functions as a weak apurinic/apyrimidinic (AP) endodeoxyribonuclease in the DNA base excision repair (BER) pathway of DNA lesions induced by oxidative and alkylating agents. Initiates repair of AP sites in DNA by catalyzing hydrolytic incision of the phosphodiester backbone immediately adjacent to the damage, generating a single-strand break with 5'-deoxyribose phosphate and 3'-hydroxyl ends. Also displays double-stranded DNA 3'-5' exonuclease, 3'-phosphodiesterase activities. Shows robust 3'-5' exonuclease activity on 3'-recessed heteroduplex DNA and is able to remove mismatched nucleotides preferentially. Shows fairly strong 3'-phosphodiesterase activity involved in the removal of 3'-damaged termini formed in DNA by oxidative agents. In the nucleus functions in the PCNA-dependent BER pathway. Plays a role in reversing blocked 3' DNA ends, problematic lesions that preclude DNA synthesis. Required for somatic hypermutation (SHM) and DNA cleavage step of class switch recombination (CSR) of immunoglobulin genes. Required for proper cell cycle progression during proliferation of peripheral lymphocytes. The chain is DNA-(apurinic or apyrimidinic site) endonuclease 2 (Apex2) from Mus musculus (Mouse).